Reading from the N-terminus, the 552-residue chain is Hyaluronan synthase 2 (552 aa).

At 1 to 11 (MHCERFLCILR) the chain is on the cytoplasmic side. Residues 12-32 (IIGTTLFGVSLLLGITAAYIV) traverse the membrane as a helical segment. The Extracellular segment spans residues 33-45 (GYQFIQTDNYYFS). Residues 46 to 66 (FGLYGAFLASHLIIQSLFAFL) traverse the membrane as a helical segment. Over 67 to 374 (EHRKMKKSLE…NAMWFHKHHL (308 aa)) the chain is Cytoplasmic. T110 carries the phosphothreonine modification. Residue K190 forms a Glycyl lysine isopeptide (Lys-Gly) (interchain with G-Cter in ubiquitin) linkage. S221 carries O-linked (GlcNAc) serine glycosylation. A Phosphothreonine modification is found at T328. The helical transmembrane segment at 375 to 395 (WMTYEAVITGFFPFFLIATVI) threads the bilayer. Topologically, residues 396-402 (QLFYRGK) are extracellular. Residues 403–423 (IWNTLLFLLTVQLVGLIKSSF) traverse the membrane as a helical segment. At 424–429 (ASCLRG) the chain is on the cytoplasmic side. Residues 430–450 (NIVMVFMSLYSVLYMSSLLPA) traverse the membrane as a helical segment. The Extracellular segment spans residues 451 to 475 (KMFAIATINKAGWGTSGRKTIVVNF). Residues 476–496 (IGLIPVSVWFTILLGGVIFTI) traverse the membrane as a helical segment. Over 497–510 (YKESKKPFSESKQT) the chain is Cytoplasmic. Residues 511–531 (VLIVGTLLYACYWVMLLTLYV) form a helical membrane-spanning segment. Topologically, residues 532 to 552 (VLINKCGRRKKGQQYDMVLDV) are extracellular.

Belongs to the NodC/HAS family. Homodimer; dimerization promotes enzymatic activity. Forms heterodimer with HAS3. Forms heterodimer with HAS1. It depends on Mg(2+) as a cofactor. In terms of processing, phosphorylation at Thr-328 is essential for hyaluronan synthase activity. Post-translationally, O-GlcNAcylation at Ser-221 increases the stability of HAS2 and plasma membrane localization. Ubiquitination at Lys-190; this ubiquitination is essential for hyaluronan synthase activity and homo- or hetero-oligomerization. Can also be poly-ubiquitinated. Deubiquitinated by USP17 and USP4. USP17 efficiently removes 'Lys-63'- and 'Lys-48'-linked polyubiquitin chains, whereas USP4 preferentially removes monoubiquitination and, partially, both 'Lys-63'- and 'Lys-48'-linked polyubiquitin chain. In terms of tissue distribution, expressed in corneal endothelial cells.

The protein localises to the cell membrane. The protein resides in the endoplasmic reticulum membrane. Its subcellular location is the vesicle. It is found in the golgi apparatus membrane. It localises to the lysosome. The enzyme catalyses [hyaluronan](n) + UDP-N-acetyl-alpha-D-glucosamine = N-acetyl-beta-D-glucosaminyl-(1-&gt;4)-[hyaluronan](n) + UDP + H(+). The catalysed reaction is N-acetyl-beta-D-glucosaminyl-(1-&gt;4)-[hyaluronan](n) + UDP-alpha-D-glucuronate = [hyaluronan](n+1) + UDP + H(+). The protein operates within glycan biosynthesis; hyaluronan biosynthesis. In terms of biological role, catalyzes the addition of GlcNAc or GlcUA monosaccharides to the nascent hyaluronan polymer. Therefore, it is essential to hyaluronan synthesis a major component of most extracellular matrices that has a structural role in tissues architectures and regulates cell adhesion, migration and differentiation. This is one of three isoenzymes responsible for cellular hyaluronan synthesis and it is particularly responsible for the synthesis of high molecular mass hyaluronan. This is Hyaluronan synthase 2 (HAS2) from Bos taurus (Bovine).